The following is a 242-amino-acid chain: Segregation and condensation protein A (242 aa).

This sequence belongs to the ScpA family. As to quaternary structure, component of a cohesin-like complex composed of ScpA, ScpB and the Smc homodimer, in which ScpA and ScpB bind to the head domain of Smc. The presence of the three proteins is required for the association of the complex with DNA.

Its subcellular location is the cytoplasm. In terms of biological role, participates in chromosomal partition during cell division. May act via the formation of a condensin-like complex containing Smc and ScpB that pull DNA away from mid-cell into both cell halves. This is Segregation and condensation protein A from Streptococcus mitis.